We begin with the raw amino-acid sequence, 437 residues long: Eukaryotic peptide chain release factor subunit 1 (437 aa).

Alanine 2 carries the post-translational modification N-acetylalanine. The short motif at 61-64 (NIKS) is the NIKS motif; plays an important role in translational termination element. Lysine 63 is modified (4-hydroxylysine). Lysine 87 is covalently cross-linked (Glycyl lysine isopeptide (Lys-Gly) (interchain with G-Cter in SUMO2)). Glutamine 185 carries the post-translational modification N5-methylglutamine. Lysine 279 participates in a covalent cross-link: Glycyl lysine isopeptide (Lys-Gly) (interchain with G-Cter in ubiquitin). The residue at position 347 (threonine 347) is a Phosphothreonine. Lysine 404 is covalently cross-linked (Glycyl lysine isopeptide (Lys-Gly) (interchain with G-Cter in SUMO2)).

Belongs to the eukaryotic release factor 1 family. Component of the eRF1-eRF3-GTP ternary complex, composed of ETF1/ERF1 and eRF3 (GSPT1/ERF3A or GSPT2/ERF3B) and GTP. Component of the transient SURF (SMG1-UPF1-eRF1-eRF3) complex. Interacts with JMJD4. The ETF1-GSPT1 complex interacts with JMJD4. In terms of processing, hydroxylation at Lys-63 by JMJD4 promotes its translational termination efficiency. Post-translationally, methylated at Gln-185 by N6AMT1. Ubiquitinated at Lys-279 via 'Lys-6'-linked polyubiquitin chains by RNF14 and RNF25 in response to ribosome collisions (ribosome stalling), leading to its degradation by the proteasome and rescue of stalled ribosomes.

The protein resides in the cytoplasm. In terms of biological role, component of the eRF1-eRF3-GTP ternary complex, a ternary complex that mediates translation termination in response to the termination codons. The eRF1-eRF3-GTP complex binds to a stop codon in the ribosomal A-site. ETF1/ERF1 is responsible for stop codon recognition and inducing hydrolysis of peptidyl-tRNA. Following GTP hydrolysis, eRF3 (GSPT1/ERF3A or GSPT2/ERF3B) dissociates, permitting ETF1/eRF1 to accommodate fully in the A-site, followed by hydrolysis of peptidyl-tRNA. Component of the transient SURF complex which recruits UPF1 to stalled ribosomes in the context of nonsense-mediated decay (NMD) of mRNAs containing premature stop codons. Required for SHFL-mediated translation termination which inhibits programmed ribosomal frameshifting (-1PRF) of mRNA from viruses and cellular genes. This Bos taurus (Bovine) protein is Eukaryotic peptide chain release factor subunit 1 (ETF1).